The chain runs to 449 residues: L-lysine-epsilon aminotransferase (449 aa).

Pyridoxal 5'-phosphate contacts are provided by G128 and A129. Residues R170 and Q274 each contribute to the 2-oxoglutarate site. R170 contacts L-lysine. Position 274 (Q274) interacts with pyridoxal 5'-phosphate. N6-(pyridoxal phosphate)lysine is present on K300. R422 contacts 2-oxoglutarate.

It belongs to the class-III pyridoxal-phosphate-dependent aminotransferase family. Pyridoxal 5'-phosphate serves as cofactor.

It catalyses the reaction L-lysine + 2-oxoglutarate = (S)-2-amino-6-oxohexanoate + L-glutamate. Functionally, catalyzes the transfer of the terminal amino group of L-lysine to alpha-ketoglutarate to yield L-glutamate and 2-aminoadipate 6-semialdehyde ((S)-2-amino-6-oxohexanoate), which is spontaneously converted to the dehydrated form 1-piperideine 6-carboxylate. This chain is L-lysine-epsilon aminotransferase, found in Mycobacterium bovis (strain ATCC BAA-935 / AF2122/97).